A 398-amino-acid chain; its full sequence is 4-hydroxy-3-methylbut-2-enyl diphosphate reductase (398 aa).

Cys66 provides a ligand contact to [4Fe-4S] cluster. His96 provides a ligand contact to (2E)-4-hydroxy-3-methylbut-2-enyl diphosphate. Position 96 (His96) interacts with dimethylallyl diphosphate. His96 contacts isopentenyl diphosphate. Cys157 lines the [4Fe-4S] cluster pocket. His185 contacts (2E)-4-hydroxy-3-methylbut-2-enyl diphosphate. His185 lines the dimethylallyl diphosphate pocket. His185 contributes to the isopentenyl diphosphate binding site. Glu187 serves as the catalytic Proton donor. Thr250 serves as a coordination point for (2E)-4-hydroxy-3-methylbut-2-enyl diphosphate. Cys288 lines the [4Fe-4S] cluster pocket. Residues Ser317, Ser318, Asn319, and Ser379 each contribute to the (2E)-4-hydroxy-3-methylbut-2-enyl diphosphate site. Residues Ser317, Ser318, Asn319, and Ser379 each contribute to the dimethylallyl diphosphate site. Isopentenyl diphosphate contacts are provided by Ser317, Ser318, Asn319, and Ser379.

It belongs to the IspH family. Requires [4Fe-4S] cluster as cofactor.

The enzyme catalyses isopentenyl diphosphate + 2 oxidized [2Fe-2S]-[ferredoxin] + H2O = (2E)-4-hydroxy-3-methylbut-2-enyl diphosphate + 2 reduced [2Fe-2S]-[ferredoxin] + 2 H(+). The catalysed reaction is dimethylallyl diphosphate + 2 oxidized [2Fe-2S]-[ferredoxin] + H2O = (2E)-4-hydroxy-3-methylbut-2-enyl diphosphate + 2 reduced [2Fe-2S]-[ferredoxin] + 2 H(+). Its pathway is isoprenoid biosynthesis; dimethylallyl diphosphate biosynthesis; dimethylallyl diphosphate from (2E)-4-hydroxy-3-methylbutenyl diphosphate: step 1/1. It participates in isoprenoid biosynthesis; isopentenyl diphosphate biosynthesis via DXP pathway; isopentenyl diphosphate from 1-deoxy-D-xylulose 5-phosphate: step 6/6. Functionally, catalyzes the conversion of 1-hydroxy-2-methyl-2-(E)-butenyl 4-diphosphate (HMBPP) into a mixture of isopentenyl diphosphate (IPP) and dimethylallyl diphosphate (DMAPP). Acts in the terminal step of the DOXP/MEP pathway for isoprenoid precursor biosynthesis. In Prochlorococcus marinus (strain MIT 9313), this protein is 4-hydroxy-3-methylbut-2-enyl diphosphate reductase.